A 381-amino-acid chain; its full sequence is Succinyl-diaminopimelate desuccinylase (381 aa).

His-68 contacts Zn(2+). Asp-70 is a catalytic residue. Asp-101 serves as a coordination point for Zn(2+). The active-site Proton acceptor is the Glu-135. Zn(2+)-binding residues include Glu-136, Glu-164, and His-350.

It belongs to the peptidase M20A family. DapE subfamily. As to quaternary structure, homodimer. Zn(2+) is required as a cofactor. Requires Co(2+) as cofactor.

It catalyses the reaction N-succinyl-(2S,6S)-2,6-diaminopimelate + H2O = (2S,6S)-2,6-diaminopimelate + succinate. It functions in the pathway amino-acid biosynthesis; L-lysine biosynthesis via DAP pathway; LL-2,6-diaminopimelate from (S)-tetrahydrodipicolinate (succinylase route): step 3/3. Its function is as follows. Catalyzes the hydrolysis of N-succinyl-L,L-diaminopimelic acid (SDAP), forming succinate and LL-2,6-diaminopimelate (DAP), an intermediate involved in the bacterial biosynthesis of lysine and meso-diaminopimelic acid, an essential component of bacterial cell walls. This is Succinyl-diaminopimelate desuccinylase from Neisseria meningitidis serogroup C / serotype 2a (strain ATCC 700532 / DSM 15464 / FAM18).